The chain runs to 298 residues: tRNA-uridine aminocarboxypropyltransferase 2 (298 aa).

Met-1 is subject to N-acetylmethionine. The segment at Met-1 to Ala-52 is disordered. The residue at position 132 (Ser-132) is a Phosphoserine. Residues Asp-178–Trp-181 carry the DXTW motif.

The protein belongs to the TDD superfamily. DTWD2 family.

The protein resides in the nucleus. Its subcellular location is the cytoplasm. The catalysed reaction is a uridine in tRNA + S-adenosyl-L-methionine = a 3-[(3S)-3-amino-3-carboxypropyl]uridine in tRNA + S-methyl-5'-thioadenosine + H(+). Functionally, catalyzes the formation of 3-(3-amino-3-carboxypropyl)uridine (acp3U) at position 20a in the D-loop of several cytoplasmic tRNAs (acp3U(20a)). Also has a weak activity to form acp3U at position 20 in the D-loop of tRNAs (acp3U(20)). Involved in glycoRNA biosynthesis by mediating formation of acp3U, which acts as an attachment site for N-glycans on tRNAs. GlycoRNAs consist of RNAs modified with secretory N-glycans that are presented on the cell surface. This Macaca fascicularis (Crab-eating macaque) protein is tRNA-uridine aminocarboxypropyltransferase 2.